The following is a 337-amino-acid chain: ATP-dependent 6-phosphofructokinase (337 aa).

G11 is an ATP binding site. R21–R25 is a binding site for ADP. ATP contacts are provided by residues R72–Y73 and G102–S105. Mg(2+) is bound at residue D103. Position 125–127 (T125–D127) interacts with substrate. The active-site Proton acceptor is D127. Position 154 (R154) interacts with ADP. Substrate contacts are provided by residues R162 and M169–R171. Residues G185–D187, K212, and K214–H216 each bind ADP. Substrate-binding positions include E223, R245, and H251–R254.

Belongs to the phosphofructokinase type A (PFKA) family. ATP-dependent PFK group I subfamily. Prokaryotic clade 'B1' sub-subfamily. In terms of assembly, homotetramer. Requires Mg(2+) as cofactor.

It localises to the cytoplasm. It catalyses the reaction beta-D-fructose 6-phosphate + ATP = beta-D-fructose 1,6-bisphosphate + ADP + H(+). It participates in carbohydrate degradation; glycolysis; D-glyceraldehyde 3-phosphate and glycerone phosphate from D-glucose: step 3/4. Its activity is regulated as follows. Allosterically activated by ADP and other diphosphonucleosides, and allosterically inhibited by phosphoenolpyruvate. Its function is as follows. Catalyzes the phosphorylation of D-fructose 6-phosphate to fructose 1,6-bisphosphate by ATP, the first committing step of glycolysis. The polypeptide is ATP-dependent 6-phosphofructokinase (Streptococcus pyogenes serotype M28 (strain MGAS6180)).